The sequence spans 209 residues: Ubiquitin-conjugating enzyme E2 S (209 aa).

A UBC core domain is found at 14-160; it reads QTIRQVMREL…ARMMTEIHAQ (147 aa). Residue Cys-98 is the Glycyl thioester intermediate of the active site. Positions 165–209 are disordered; sequence GVGATGDAKDDGGPSTKKHAGLDKKLQDKKKEKLLKEKKRMLKRL. Residues 184–199 are compositionally biased toward basic and acidic residues; that stretch reads AGLDKKLQDKKKEKLL. The span at 200–209 shows a compositional bias: basic residues; that stretch reads KEKKRMLKRL.

Belongs to the ubiquitin-conjugating enzyme family.

The catalysed reaction is S-ubiquitinyl-[E1 ubiquitin-activating enzyme]-L-cysteine + [E2 ubiquitin-conjugating enzyme]-L-cysteine = [E1 ubiquitin-activating enzyme]-L-cysteine + S-ubiquitinyl-[E2 ubiquitin-conjugating enzyme]-L-cysteine.. Its pathway is protein modification; protein ubiquitination. Functionally, catalyzes the covalent attachment of ubiquitin to other proteins. Acts as an essential factor of the anaphase promoting complex/cyclosome (APC/C), a cell cycle-regulated ubiquitin ligase that controls progression through mitosis. Acts by specifically elongating polyubiquitin chains initiated by the E2 enzyme vih/UbcH10 on APC/C substrates, enhancing the degradation of APC/C substrates by the proteasome and promoting mitotic exit. This is Ubiquitin-conjugating enzyme E2 S from Drosophila simulans (Fruit fly).